We begin with the raw amino-acid sequence, 466 residues long: Soluble pyridine nucleotide transhydrogenase (466 aa).

Residue 36–45 (ERYHNVGGGC) coordinates FAD.

It belongs to the class-I pyridine nucleotide-disulfide oxidoreductase family. FAD serves as cofactor.

The protein localises to the cytoplasm. The catalysed reaction is NAD(+) + NADPH = NADH + NADP(+). Conversion of NADPH, generated by peripheral catabolic pathways, to NADH, which can enter the respiratory chain for energy generation. The sequence is that of Soluble pyridine nucleotide transhydrogenase from Klebsiella pneumoniae subsp. pneumoniae (strain ATCC 700721 / MGH 78578).